A 258-amino-acid polypeptide reads, in one-letter code: uncharacterized protein (258 aa).

This is an uncharacterized protein from Bacillus sp. (strain OxB-1).